The primary structure comprises 157 residues: MGQLNVIEGHYDASGLRFAILASRFNDFVVDRLISGSIDCILRHGGTKENITIVRVAGAMELPLVCKKLSLTSKFDGIIILGAIIRGSTPHFDYVASEATKGVVNVSLQTDVPIGFGVLTTDTIEQAIERAGSKAGNKGSDATLAVLESIRVIQKIS.

5-amino-6-(D-ribitylamino)uracil contacts are provided by residues Phe-25, Ala-59 to Glu-61, and Ala-83 to Ile-85. Ser-88–Thr-89 contacts (2S)-2-hydroxy-3-oxobutyl phosphate. His-91 acts as the Proton donor in catalysis. Phe-116 contacts 5-amino-6-(D-ribitylamino)uracil. Arg-130 serves as a coordination point for (2S)-2-hydroxy-3-oxobutyl phosphate.

Belongs to the DMRL synthase family.

It carries out the reaction (2S)-2-hydroxy-3-oxobutyl phosphate + 5-amino-6-(D-ribitylamino)uracil = 6,7-dimethyl-8-(1-D-ribityl)lumazine + phosphate + 2 H2O + H(+). It participates in cofactor biosynthesis; riboflavin biosynthesis; riboflavin from 2-hydroxy-3-oxobutyl phosphate and 5-amino-6-(D-ribitylamino)uracil: step 1/2. Catalyzes the formation of 6,7-dimethyl-8-ribityllumazine by condensation of 5-amino-6-(D-ribitylamino)uracil with 3,4-dihydroxy-2-butanone 4-phosphate. This is the penultimate step in the biosynthesis of riboflavin. The sequence is that of 6,7-dimethyl-8-ribityllumazine synthase from Lawsonia intracellularis (strain PHE/MN1-00).